We begin with the raw amino-acid sequence, 665 residues long: Putative phospholipid:diacylglycerol acyltransferase 2 (665 aa).

Residues 48–68 (LIGYLCTAWWLLLFLYHSVPV) traverse the membrane as a helical segment. Ser237 functions as the Acyl-ester intermediate in the catalytic mechanism. Active-site charge relay system residues include Asp567 and His620.

The protein belongs to the AB hydrolase superfamily. Lipase family.

Its subcellular location is the membrane. It carries out the reaction a glycerophospholipid + a 1,2-diacyl-sn-glycerol = a monoacylglycerophospholipid + a triacyl-sn-glycerol. This chain is Putative phospholipid:diacylglycerol acyltransferase 2 (PDAT2), found in Arabidopsis thaliana (Mouse-ear cress).